Here is a 51-residue protein sequence, read N- to C-terminus: Ribosome biogenesis protein Nop10 (51 aa).

It belongs to the NOP10 family.

Involved in ribosome biogenesis; more specifically in 18S rRNA pseudouridylation and in cleavage of pre-rRNA. This is Ribosome biogenesis protein Nop10 from Methanococcus maripaludis (strain C5 / ATCC BAA-1333).